The chain runs to 68 residues: ATP synthase F(0) complex subunit 8 (68 aa).

A helical transmembrane segment spans residues 8–24; sequence TWFTIIMAMLPTLYLIT. Residue K54 is modified to N6-acetyllysine; alternate. K54 is modified (N6-succinyllysine; alternate). K57 is subject to N6-acetyllysine.

This sequence belongs to the ATPase protein 8 family. As to quaternary structure, component of the ATP synthase complex composed at least of ATP5F1A/subunit alpha, ATP5F1B/subunit beta, ATP5MC1/subunit c (homooctomer), MT-ATP6/subunit a, MT-ATP8/subunit 8, ATP5ME/subunit e, ATP5MF/subunit f, ATP5MG/subunit g, ATP5MK/subunit k, ATP5MJ/subunit j, ATP5F1C/subunit gamma, ATP5F1D/subunit delta, ATP5F1E/subunit epsilon, ATP5PF/subunit F6, ATP5PB/subunit b, ATP5PD/subunit d, ATP5PO/subunit OSCP. ATP synthase complex consists of a soluble F(1) head domain (subunits alpha(3) and beta(3)) - the catalytic core - and a membrane F(0) domain - the membrane proton channel (subunits c, a, 8, e, f, g, k and j). These two domains are linked by a central stalk (subunits gamma, delta, and epsilon) rotating inside the F1 region and a stationary peripheral stalk (subunits F6, b, d, and OSCP). Interacts with PRICKLE3.

It is found in the mitochondrion membrane. Its function is as follows. Subunit 8, of the mitochondrial membrane ATP synthase complex (F(1)F(0) ATP synthase or Complex V) that produces ATP from ADP in the presence of a proton gradient across the membrane which is generated by electron transport complexes of the respiratory chain. ATP synthase complex consist of a soluble F(1) head domain - the catalytic core - and a membrane F(1) domain - the membrane proton channel. These two domains are linked by a central stalk rotating inside the F(1) region and a stationary peripheral stalk. During catalysis, ATP synthesis in the catalytic domain of F(1) is coupled via a rotary mechanism of the central stalk subunits to proton translocation. In vivo, can only synthesize ATP although its ATP hydrolase activity can be activated artificially in vitro. Part of the complex F(0) domain. The protein is ATP synthase F(0) complex subunit 8 of Papio hamadryas (Hamadryas baboon).